The sequence spans 835 residues: Lon protease (835 aa).

The Lon N-terminal domain occupies 4-224 (LPYIAIRNQL…LAINMLINAI (221 aa)). 412–419 (GPPGTGKT) is a binding site for ATP. Positions 649-832 (QPKAGVVNAL…DEIFKYIFEA (184 aa)) constitute a Lon proteolytic domain. Catalysis depends on residues S738 and K781.

The protein belongs to the peptidase S16 family. Homohexamer. Organized in a ring with a central cavity.

Its subcellular location is the cytoplasm. It carries out the reaction Hydrolysis of proteins in presence of ATP.. Its function is as follows. ATP-dependent serine protease that mediates the selective degradation of mutant and abnormal proteins as well as certain short-lived regulatory proteins. Required for cellular homeostasis and for survival from DNA damage and developmental changes induced by stress. Degrades polypeptides processively to yield small peptide fragments that are 5 to 10 amino acids long. Binds to DNA in a double-stranded, site-specific manner. The sequence is that of Lon protease from Metamycoplasma arthritidis (strain 158L3-1) (Mycoplasma arthritidis).